Here is a 240-residue protein sequence, read N- to C-terminus: MKSPHKVIYCYLIILYKLSSCHIYYKYIPFRLTVLVNYFLLLNVGEIMWKKLESLTSKIYEKARKRKGEHRIALLIDGPNMLRKEFNIDLDKIREVLSEFGDIVIGRVYLNQYASDKLIEAVINQGFEPKISAGDVDVEMAVDATELVFNPNIDTIAYVTRDADFLPAIRKAKERGKKVIVIGAEPGFSTALQNIADYVIKIGEEFQLDREKLEKKKKNKFLKVEEKQKDKEETENREEP.

This is an uncharacterized protein from Methanocaldococcus jannaschii (strain ATCC 43067 / DSM 2661 / JAL-1 / JCM 10045 / NBRC 100440) (Methanococcus jannaschii).